The following is a 284-amino-acid chain: MAVRDGGGSAPVGSQEQAVDRVRETVARSRRYGAVAPETVRRLAERALVASRGDEPEAVKRTKRSLHEIYGAYLPERAPGYPGLLRDIGAAVGGGDPDAVAAAVSRAMRVHASTRERLPYLREFYAAVFGAVPTPAVVQDLACGLNPLAFGSMGLPAQTTYLASDIDSQQMEFLDRALDLLEVEHRVEVVDLVSGAVPAQHADVTLVLKTLPLLERQRAGAGWELVDALRSPFVVVSFPTRSLGQRSKGMFQTYSAAFEAQAAERGWTFDQAEIANELIYIVRR.

Residues tyrosine 73, 111 to 113 (HAS), arginine 117, alanine 142, aspartate 165, 191 to 192 (DL), leucine 208, and glutamine 217 contribute to the S-adenosyl-L-methionine site.

It belongs to the methyltransferase superfamily. Aminoglycoside resistance family.

It carries out the reaction guanosine(1405) in 16S rRNA + S-adenosyl-L-methionine = N(7)-methylguanosine(1405) in 16S rRNA + S-adenosyl-L-homocysteine. In terms of biological role, specifically methylates the N(7) position of guanine 1405 in 16S rRNA. Confers resistance to various aminoglycosides, including gentamicin and kanamycin. This chain is 16S rRNA (guanine(1405)-N(7))-methyltransferase (Krm), found in Frankia casuarinae (strain DSM 45818 / CECT 9043 / HFP020203 / CcI3).